Here is a 150-residue protein sequence, read N- to C-terminus: Cytochrome c oxidase subunit 5A, mitochondrial (150 aa).

Residues 1 to 41 (MLGAALRRCAVAATTRAGPRGLLHSARTPGPAAAIQSVRCY) constitute a mitochondrion transit peptide. Residues 2-17 (LGAALRRCAVAATTRA) carry the SIFI-degron motif. An N6-acetyllysine mark is found at K87 and K113. T141 is subject to Phosphothreonine.

Belongs to the cytochrome c oxidase subunit 5A family. In terms of assembly, component of the cytochrome c oxidase (complex IV, CIV), a multisubunit enzyme composed of 14 subunits. The complex is composed of a catalytic core of 3 subunits MT-CO1, MT-CO2 and MT-CO3, encoded in the mitochondrial DNA, and 11 supernumerary subunits COX4I, COX5A, COX5B, COX6A, COX6B, COX6C, COX7A, COX7B, COX7C, COX8 and NDUFA4, which are encoded in the nuclear genome. The complex exists as a monomer or a dimer and forms supercomplexes (SCs) in the inner mitochondrial membrane with NADH-ubiquinone oxidoreductase (complex I, CI) and ubiquinol-cytochrome c oxidoreductase (cytochrome b-c1 complex, complex III, CIII), resulting in different assemblies (supercomplex SCI(1)III(2)IV(1) and megacomplex MCI(2)III(2)IV(2)). Interacts with AFG1L. Interacts with RAB5IF. In response to mitochondrial stress, the precursor protein is ubiquitinated by the SIFI complex in the cytoplasm before mitochondrial import, leading to its degradation. Within the SIFI complex, UBR4 initiates ubiquitin chain that are further elongated or branched by KCMF1.

Its subcellular location is the mitochondrion inner membrane. The protein operates within energy metabolism; oxidative phosphorylation. In terms of biological role, component of the cytochrome c oxidase, the last enzyme in the mitochondrial electron transport chain which drives oxidative phosphorylation. The respiratory chain contains 3 multisubunit complexes succinate dehydrogenase (complex II, CII), ubiquinol-cytochrome c oxidoreductase (cytochrome b-c1 complex, complex III, CIII) and cytochrome c oxidase (complex IV, CIV), that cooperate to transfer electrons derived from NADH and succinate to molecular oxygen, creating an electrochemical gradient over the inner membrane that drives transmembrane transport and the ATP synthase. Cytochrome c oxidase is the component of the respiratory chain that catalyzes the reduction of oxygen to water. Electrons originating from reduced cytochrome c in the intermembrane space (IMS) are transferred via the dinuclear copper A center (CU(A)) of subunit 2 and heme A of subunit 1 to the active site in subunit 1, a binuclear center (BNC) formed by heme A3 and copper B (CU(B)). The BNC reduces molecular oxygen to 2 water molecules using 4 electrons from cytochrome c in the IMS and 4 protons from the mitochondrial matrix. The polypeptide is Cytochrome c oxidase subunit 5A, mitochondrial (COX5A) (Pan troglodytes (Chimpanzee)).